The sequence spans 145 residues: D-aminoacyl-tRNA deacylase (145 aa).

The Gly-cisPro motif, important for rejection of L-amino acids motif lies at 137–138 (GP).

This sequence belongs to the DTD family. As to quaternary structure, homodimer.

It localises to the cytoplasm. It carries out the reaction glycyl-tRNA(Ala) + H2O = tRNA(Ala) + glycine + H(+). The catalysed reaction is a D-aminoacyl-tRNA + H2O = a tRNA + a D-alpha-amino acid + H(+). Its function is as follows. An aminoacyl-tRNA editing enzyme that deacylates mischarged D-aminoacyl-tRNAs. Also deacylates mischarged glycyl-tRNA(Ala), protecting cells against glycine mischarging by AlaRS. Acts via tRNA-based rather than protein-based catalysis; rejects L-amino acids rather than detecting D-amino acids in the active site. By recycling D-aminoacyl-tRNA to D-amino acids and free tRNA molecules, this enzyme counteracts the toxicity associated with the formation of D-aminoacyl-tRNA entities in vivo and helps enforce protein L-homochirality. In Escherichia coli O139:H28 (strain E24377A / ETEC), this protein is D-aminoacyl-tRNA deacylase.